A 760-amino-acid polypeptide reads, in one-letter code: BMP/retinoic acid-inducible neural-specific protein 1 (760 aa).

A signal peptide spans 1 to 16; the sequence is MNWRFVELLYFLFVWG. The 184-residue stretch at 68–251 folds into the MACPF domain; that stretch reads RYKIYREFAR…FVQSALSYIM (184 aa). Asparagine 156, asparagine 433, asparagine 443, asparagine 553, asparagine 599, asparagine 630, and asparagine 676 each carry an N-linked (GlcNAc...) asparagine glycan.

Belongs to the BRINP family. Expressed in brain. Expressed in GABAergic neurons of the pre-frontal cortex. Weakly expressed in embryonic stem (ES) cells and in ES-derived neural stem cells (NSCs).

The protein localises to the cytoplasm. Plays a role in neurogenesis, brain development, and the functioning of GABAergic neurons. May suppress cell cycle progression in postmitotic neurons by inhibiting G1/S transition. This chain is BMP/retinoic acid-inducible neural-specific protein 1 (Brinp1), found in Mus musculus (Mouse).